The sequence spans 161 residues: Dihydrofolate reductase (161 aa).

One can recognise a DHFR domain in the interval 2-161 (KISLISAISN…YNFCFEILSR (160 aa)). 6–8 (ISA) is a binding site for substrate. Residues 7-8 (SA) and 15-20 (IGHNNK) contribute to the NADP(+) site. Asp-28 contacts substrate. 44–47 (GRLT) is a binding site for NADP(+). Arg-59 lines the substrate pocket. NADP(+)-binding positions include 64-66 (ISH) and 96-101 (IGGSKI). Position 115 (Thr-115) interacts with substrate.

It belongs to the dihydrofolate reductase family.

The enzyme catalyses (6S)-5,6,7,8-tetrahydrofolate + NADP(+) = 7,8-dihydrofolate + NADPH + H(+). Its pathway is cofactor biosynthesis; tetrahydrofolate biosynthesis; 5,6,7,8-tetrahydrofolate from 7,8-dihydrofolate: step 1/1. Its function is as follows. Key enzyme in folate metabolism. Catalyzes an essential reaction for de novo glycine and purine synthesis, and for DNA precursor synthesis. This Buchnera aphidicola subsp. Schizaphis graminum (strain Sg) protein is Dihydrofolate reductase (folA).